The sequence spans 309 residues: Malate dehydrogenase (309 aa).

NAD(+) is bound by residues 9–14 (GAGFVG) and Asp-33. Substrate is bound by residues Arg-82 and Arg-88. NAD(+) is bound by residues Asn-95 and 118–120 (VNN). Asn-120 and Arg-151 together coordinate substrate. Residue His-175 is the Proton acceptor of the active site.

The protein belongs to the LDH/MDH superfamily. MDH type 3 family.

The catalysed reaction is (S)-malate + NAD(+) = oxaloacetate + NADH + H(+). Its function is as follows. Catalyzes the reversible oxidation of malate to oxaloacetate. This chain is Malate dehydrogenase, found in Roseiflexus sp. (strain RS-1).